A 550-amino-acid polypeptide reads, in one-letter code: Glucose-6-phosphate isomerase 1 (550 aa).

Residue glutamate 353 is the Proton donor of the active site. Residues histidine 384 and lysine 512 contribute to the active site.

This sequence belongs to the GPI family.

It is found in the cytoplasm. The enzyme catalyses alpha-D-glucose 6-phosphate = beta-D-fructose 6-phosphate. It participates in carbohydrate biosynthesis; gluconeogenesis. The protein operates within carbohydrate degradation; glycolysis; D-glyceraldehyde 3-phosphate and glycerone phosphate from D-glucose: step 2/4. In terms of biological role, catalyzes the reversible isomerization of glucose-6-phosphate to fructose-6-phosphate. The sequence is that of Glucose-6-phosphate isomerase 1 from Thiobacillus denitrificans (strain ATCC 25259 / T1).